The chain runs to 344 residues: Ig alpha chain C region (344 aa).

The region spanning 6 to 99 (PTIYPLTLPP…SNPVQELDVN (94 aa)) is the Ig-like 1 domain. Intrachain disulfides connect C26–C84 and C76–C100. N38 and N99 each carry an N-linked (GlcNAc...) asparagine glycan. S101 carries an O-linked (GalNAc) serine; in variant MOPC 47A glycan. Cystine bridges form between C114-C171 and C138-C195. Ig-like domains follow at residues 116-206 (PSLS…GTLT) and 219-321 (PQVH…KTID). N-linked (GlcNAc...) asparagine glycosylation is present at N329. The N-linked (GlcNAc...) asparagine; in variant M511 glycan is linked to S331.

Its function is as follows. Ig alpha is the major immunoglobulin class in body secretions. It may serve both to defend against local infection and to prevent access of foreign antigens to the general immunologic system. The polypeptide is Ig alpha chain C region (Mus musculus (Mouse)).